The following is a 282-amino-acid chain: Endochitinase 4 (282 aa).

A GH18 domain is found at 1–282 (GAKNGVHPPL…TWSINWDGSK (282 aa)). Glutamate 112 (proton donor) is an active-site residue. Asparagine 265 carries N-linked (GlcNAc...) asparagine glycosylation.

This sequence belongs to the glycosyl hydrolase 18 family. Chitinase class V subfamily.

The protein resides in the secreted. It catalyses the reaction Random endo-hydrolysis of N-acetyl-beta-D-glucosaminide (1-&gt;4)-beta-linkages in chitin and chitodextrins.. In terms of biological role, secreted chitinase involved in the degradation of chitin, a component of the cell walls of fungi and exoskeletal elements of some animals (including worms and arthropods). Participates in the infection process and directly acts in the penetration process of the host cuticle. The chain is Endochitinase 4 (chi4) from Metarhizium anisopliae (Entomophthora anisopliae).